Consider the following 292-residue polypeptide: Protoheme IX farnesyltransferase (292 aa).

The next 9 membrane-spanning stretches (helical) occupy residues 13–33, 35–55, 84–104, 106–126, 135–155, 161–181, 206–226, 231–251, and 263–283; these read ILFG…QGHV, FLLL…GCVV, TALI…WFWV, PYSF…YSLW, TIIG…AVTH, ALLI…AIAI, VECL…YCFG, FFLL…IIGF, and LFLF…FTYQ.

This sequence belongs to the UbiA prenyltransferase family. Protoheme IX farnesyltransferase subfamily.

It localises to the cell inner membrane. It catalyses the reaction heme b + (2E,6E)-farnesyl diphosphate + H2O = Fe(II)-heme o + diphosphate. The protein operates within porphyrin-containing compound metabolism; heme O biosynthesis; heme O from protoheme: step 1/1. In terms of biological role, converts heme B (protoheme IX) to heme O by substitution of the vinyl group on carbon 2 of heme B porphyrin ring with a hydroxyethyl farnesyl side group. This chain is Protoheme IX farnesyltransferase, found in Acinetobacter baylyi (strain ATCC 33305 / BD413 / ADP1).